We begin with the raw amino-acid sequence, 406 residues long: Sorting nexin-6 (406 aa).

Methionine 1 is modified (N-acetylmethionine). At methionine 2 the chain carries N-acetylmethionine; in Sorting nexin-6, N-terminally processed. The segment at 2–179 is interaction with PIM1; sequence MEGLDDGPDF…NQDLSVRGKN (178 aa). Positions 26-173 constitute a PX domain; that stretch reads LQSDAALQVD…HVFLEYNQDL (148 aa). A 1,2-diacyl-sn-glycero-3-phospho-(1D-myo-inositol-4,5-bisphosphate)-binding positions include 41–47, 100–106, and 114–117; these read SERDKVK, FDASREK, and EGSM. Serine 116 and serine 194 each carry phosphoserine. The tract at residues 182–199 is membrane-binding amphipathic helix; the sequence is EKLEDFFKNMVKSADGVI. In terms of domain architecture, BAR spans 203–406; the sequence is VKDVDDFFEH…NCLAVLNGDT (204 aa).

The protein belongs to the sorting nexin family. Forms heterodimers with BAR domain-containing sorting nexins SNX1 and SNX2. The heterodimers are proposed to self-assemble into helical arrays on the membrane to stabilize and expand local membrane curvature underlying endosomal tubule formation. Thought to be a component of the originally described retromer complex (also called SNX-BAR retromer) which is a pentamer containing the heterotrimeric retromer cargo-selective complex (CSC), also described as vacuolar protein sorting subcomplex (VPS), and a heterodimeric membrane-deforming subcomplex formed between SNX1 or SNX2 and SNX5 or SNX6 (also called SNX-BAR subcomplex); the respective CSC and SNX-BAR subcomplexes associate with low affinity. Interacts with SNX1, SNX2, VPS26A, VPS29, VPS35, TGFB receptors, BACE1, BRMS1, PIP5K1C. Interacts with DCTN1; the association with DCTN1 is involved in movement of retromer-c ontaining vesicles toward the TGN. Interacts with PIM1; translocating SNX6 to the nucleus. Interacts with CDKN1B and GIT1. In vitro phosphorylated by PIM1; not affecting PIM1-dependent nuclear translocation.

The protein resides in the early endosome membrane. It localises to the cytoplasmic vesicle. Its subcellular location is the cytoplasm. The protein localises to the nucleus. Involved in several stages of intracellular trafficking. Interacts with membranes phosphatidylinositol 3,4-bisphosphate and/or phosphatidylinositol 4,5-bisphosphate. Acts in part as component of the retromer membrane-deforming SNX-BAR subcomplex. The SNX-BAR retromer mediates retrograde transport of cargo proteins from endosomes to the trans-Golgi network (TGN) and is involved in endosome-to-plasma membrane transport for cargo protein recycling. The SNX-BAR subcomplex functions to deform the donor membrane into a tubular profile called endosome-to-TGN transport carrier (ETC). Does not have in vitro vesicle-to-membrane remodeling activity. Involved in retrograde endosome-to-TGN transport of lysosomal enzyme receptor IGF2R. May function as link between transport vesicles and dynactin. Negatively regulates retrograde transport of BACE1 from the cell surface to the trans-Golgi network. Involved in E-cadherin sorting and degradation; inhibits PIP5K1C-mediated E-cadherin degradation. In association with GIT1 involved in EGFR degradation. Promotes lysosomal degradation of CDKN1B. May contribute to transcription regulation. The sequence is that of Sorting nexin-6 (SNX6) from Pongo abelii (Sumatran orangutan).